The primary structure comprises 157 residues: Ribosome maturation factor RimP (157 aa).

The protein belongs to the RimP family.

The protein localises to the cytoplasm. Functionally, required for maturation of 30S ribosomal subunits. This is Ribosome maturation factor RimP from Lactococcus lactis subsp. cremoris (strain MG1363).